The following is a 335-amino-acid chain: S-adenosylmethionine:tRNA ribosyltransferase-isomerase (335 aa).

This sequence belongs to the QueA family. In terms of assembly, monomer.

The protein resides in the cytoplasm. The catalysed reaction is 7-aminomethyl-7-carbaguanosine(34) in tRNA + S-adenosyl-L-methionine = epoxyqueuosine(34) in tRNA + adenine + L-methionine + 2 H(+). The protein operates within tRNA modification; tRNA-queuosine biosynthesis. Its function is as follows. Transfers and isomerizes the ribose moiety from AdoMet to the 7-aminomethyl group of 7-deazaguanine (preQ1-tRNA) to give epoxyqueuosine (oQ-tRNA). The polypeptide is S-adenosylmethionine:tRNA ribosyltransferase-isomerase (Thermosipho africanus (strain TCF52B)).